We begin with the raw amino-acid sequence, 299 residues long: Endonuclease G, mitochondrial (299 aa).

The N-terminal 48 residues, 1 to 48 (MQLLRAGLTLALGAGLGAAAESWWRQRADARATPGLLSRLPVLPVAAA), are a transit peptide targeting the mitochondrion. A Phosphothreonine modification is found at Thr130. His143 (proton acceptor) is an active-site residue. Position 174 (Asn174) interacts with Mg(2+). The essential for deoxyribonuclease activity stretch occupies residues 288-298 (AGSLKAITAGS). A Phosphoserine modification is found at Ser290.

Belongs to the DNA/RNA non-specific endonuclease family. Homodimer; disulfide-linked. Homodimerization is essential for its activity. Interacts with YWHAG. Requires Mg(2+) as cofactor. Post-translationally, GSK3-beta-mediated dual phosphorylations at Thr-130 and Ser-290 is necessary for its interaction with YWHAG and the induction of autophagy.

It localises to the mitochondrion. Endonuclease that preferentially catalyzes the cleavage of double-stranded 5-hydroxymethylcytosine (5hmC)-modified DNA. The 5hmC-modified nucleotide does not increase the binding affinity, but instead increases the efficiency of cutting and specifies the site of cleavage for the modified DNAs. Shows significantly higher affinity for four- stranded Holliday junction over duplex and single-stranded DNAs. Promotes conservative recombination when the DNA is 5hmC-modified. Promotes autophagy through the suppression of mTOR by its phosphorylation-mediated interaction with YWHAG and its endonuclease activity-mediated DNA damage response. GSK3-beta mediated phosphorylation of ENDOG enhances its interaction with YWHAG, leading to the release of TSC2 and PIK3C3 from YWHAG resulting in mTOR pathway suppression and autophagy initiation. Promotes cleavage of mtDNA in response to oxidative and nitrosative stress, in turn inducing compensatory mtDNA replication. The polypeptide is Endonuclease G, mitochondrial (ENDOG) (Bos taurus (Bovine)).